A 252-amino-acid chain; its full sequence is 5-oxoprolinase subunit A (252 aa).

Belongs to the LamB/PxpA family. Forms a complex composed of PxpA, PxpB and PxpC.

The catalysed reaction is 5-oxo-L-proline + ATP + 2 H2O = L-glutamate + ADP + phosphate + H(+). Its function is as follows. Catalyzes the cleavage of 5-oxoproline to form L-glutamate coupled to the hydrolysis of ATP to ADP and inorganic phosphate. The chain is 5-oxoprolinase subunit A from Mycobacterium avium (strain 104).